The sequence spans 844 residues: Patched-related protein 9 (844 aa).

The region spanning 264-421 is the SSD domain; sequence LIPWMPWTSL…VTFFNAVMSL (158 aa).

Belongs to the patched family.

In Caenorhabditis elegans, this protein is Patched-related protein 9 (ptr-9).